The sequence spans 259 residues: Glucosamine-6-phosphate deaminase (259 aa).

Catalysis depends on Asp66, which acts as the Proton acceptor; for enolization step. Asp135 serves as the catalytic For ring-opening step. Residue His137 is the Proton acceptor; for ring-opening step of the active site. Glu142 acts as the For ring-opening step in catalysis.

The protein belongs to the glucosamine/galactosamine-6-phosphate isomerase family. NagB subfamily.

The catalysed reaction is alpha-D-glucosamine 6-phosphate + H2O = beta-D-fructose 6-phosphate + NH4(+). The protein operates within amino-sugar metabolism; N-acetylneuraminate degradation; D-fructose 6-phosphate from N-acetylneuraminate: step 5/5. Functionally, catalyzes the reversible isomerization-deamination of glucosamine 6-phosphate (GlcN6P) to form fructose 6-phosphate (Fru6P) and ammonium ion. The polypeptide is Glucosamine-6-phosphate deaminase (Rhodococcus opacus (strain B4)).